We begin with the raw amino-acid sequence, 350 residues long: B1 bradykinin receptor (350 aa).

At 1–41 the chain is on the extracellular side; that stretch reads MASRAPLELLPLNRSQLSPPNATTCDDAPEAWDLLHRVLPS. N-linked (GlcNAc...) asparagine glycosylation is found at Asn13 and Asn21. Residues 42–62 form a helical membrane-spanning segment; it reads VIIIICVCGLLGNLLVLAVLL. The Cytoplasmic segment spans residues 63–72; the sequence is RPRRRLNVAE. A helical transmembrane segment spans residues 73-93; the sequence is MYLANLAASDLVFVLGLPFWA. The Extracellular segment spans residues 94 to 110; it reads ANISNQFRWPFGGLLCR. A glycan (N-linked (GlcNAc...) asparagine) is linked at Asn95. A disulfide bridge connects residues Cys109 and Cys186. A helical transmembrane segment spans residues 111–131; the sequence is LVNGVIKANLFISIFLVVAIS. Residues 132-150 are Cytoplasmic-facing; that stretch reads RDRYRALVHPMATRRRRQA. A helical transmembrane segment spans residues 151 to 171; it reads RATCVLIWVAGSLLSVPTFLF. Over 172–204 the chain is Extracellular; sequence RSIEAVPELNNDSACVLLHPPGAWHVARMVELN. Asn182 carries an N-linked (GlcNAc...) asparagine glycan. A helical membrane pass occupies residues 205-225; sequence VLGFLLPLAAIVFFNCHILAS. Topologically, residues 226-248 are cytoplasmic; the sequence is LRGRPEVRGARCGGPPDGRTTAL. A helical membrane pass occupies residues 249–269; the sequence is ILTFVAAFLVCWTPYHFFAFL. At 270-292 the chain is on the extracellular side; the sequence is EFLTQVQVVRGCFWENFKDLGLQ. The chain crosses the membrane as a helical span at residues 293–313; the sequence is YASFFAFINSCLNPVIYVFVG. The Cytoplasmic portion of the chain corresponds to 314–350; it reads RLFRTRVWDLFKQCAPRRPPAVSWSHRKRVLQLFWQN. Cys327 carries the S-palmitoyl cysteine lipid modification.

The protein belongs to the G-protein coupled receptor 1 family. Bradykinin receptor subfamily. BDKRB1 sub-subfamily.

It localises to the cell membrane. In terms of biological role, this is a receptor for bradykinin. Could be a factor in chronic pain and inflammation. This chain is B1 bradykinin receptor (BDKRB1), found in Canis lupus familiaris (Dog).